We begin with the raw amino-acid sequence, 393 residues long: Heparan sulfate glucosamine 3-O-sulfotransferase 3A1 (393 aa).

Over 1–24 (MAPSGPTGAQPSPAEPLSRSIFRK) the chain is Cytoplasmic. A helical; Signal-anchor for type II membrane protein membrane pass occupies residues 25–43 (FLLMLCSLLTSLYVFYCLA). Residues 44 to 393 (ERCPPGSGPV…MTGRDFGWDG (350 aa)) are Lumenal-facing. The segment at 85-121 (QRRRRGRSGPGDSSDQEEQSPGLAAAPGGSGAGSSVA) is disordered. 149 to 153 (KGGTR) contributes to the 3'-phosphoadenylyl sulfate binding site. Residues 171–177 (EPHFFDR) and 202–205 (KTPS) each bind substrate. Residues Arg-230 and Ser-238 each contribute to the 3'-phosphoadenylyl sulfate site. A glycan (N-linked (GlcNAc...) asparagine) is linked at Asn-260. 270-271 (WS) is a substrate binding site. Residue Asn-331 is glycosylated (N-linked (GlcNAc...) asparagine). Cys-338 and Cys-350 are oxidised to a cystine. 3'-phosphoadenylyl sulfate is bound at residue 355 to 359 (KGRAH).

The protein belongs to the sulfotransferase 1 family.

It is found in the golgi apparatus membrane. It catalyses the reaction alpha-D-glucosaminyl-[heparan sulfate](n) + 3'-phosphoadenylyl sulfate = 3-sulfo-alpha-D-glucosaminyl-[heparan sulfate](n) + adenosine 3',5'-bisphosphate + H(+). Its function is as follows. Sulfotransferase that utilizes 3'-phospho-5'-adenylyl sulfate (PAPS) to catalyze the transfer of a sulfo group to an N-unsubstituted glucosamine linked to a 2-O-sulfo iduronic acid unit on heparan sulfate. Catalyzes the O-sulfation of glucosamine in IdoUA2S-GlcNS and also in IdoUA2S-GlcNH2. Unlike HS3ST1/3-OST-1, does not convert non-anticoagulant heparan sulfate to anticoagulant heparan sulfate. The polypeptide is Heparan sulfate glucosamine 3-O-sulfotransferase 3A1 (Hs3st3a1) (Mus musculus (Mouse)).